Consider the following 672-residue polypeptide: uncharacterized protein (672 aa).

A compositionally biased stretch (basic and acidic residues) spans Met-1–Leu-10. The disordered stretch occupies residues Met-1–Pro-40.

This is an uncharacterized protein from Mycobacterium tuberculosis (strain CDC 1551 / Oshkosh).